A 191-amino-acid chain; its full sequence is Holliday junction branch migration complex subunit RuvA (191 aa).

The tract at residues 1-64 (MIGRLTGTLA…EDAQLLYGFL (64 aa)) is domain I. Residues 65-138 (TATERATFRQ…KGKLGPDLAL (74 aa)) are domain II. The interval 138 to 142 (LPGAV) is flexible linker. The segment at 143–191 (IRNEAQSDIVQALIALGYNEREAAAAIKPLPADVGVSDGIKLALRALGK) is domain III.

Belongs to the RuvA family. As to quaternary structure, homotetramer. Forms an RuvA(8)-RuvB(12)-Holliday junction (HJ) complex. HJ DNA is sandwiched between 2 RuvA tetramers; dsDNA enters through RuvA and exits via RuvB. An RuvB hexamer assembles on each DNA strand where it exits the tetramer. Each RuvB hexamer is contacted by two RuvA subunits (via domain III) on 2 adjacent RuvB subunits; this complex drives branch migration. In the full resolvosome a probable DNA-RuvA(4)-RuvB(12)-RuvC(2) complex forms which resolves the HJ.

Its subcellular location is the cytoplasm. Functionally, the RuvA-RuvB-RuvC complex processes Holliday junction (HJ) DNA during genetic recombination and DNA repair, while the RuvA-RuvB complex plays an important role in the rescue of blocked DNA replication forks via replication fork reversal (RFR). RuvA specifically binds to HJ cruciform DNA, conferring on it an open structure. The RuvB hexamer acts as an ATP-dependent pump, pulling dsDNA into and through the RuvAB complex. HJ branch migration allows RuvC to scan DNA until it finds its consensus sequence, where it cleaves and resolves the cruciform DNA. This is Holliday junction branch migration complex subunit RuvA from Leptothrix cholodnii (strain ATCC 51168 / LMG 8142 / SP-6) (Leptothrix discophora (strain SP-6)).